The sequence spans 95 residues: Small ribosomal subunit protein bS20 (95 aa).

This sequence belongs to the bacterial ribosomal protein bS20 family.

In terms of biological role, binds directly to 16S ribosomal RNA. This Ehrlichia chaffeensis (strain ATCC CRL-10679 / Arkansas) protein is Small ribosomal subunit protein bS20.